Here is a 251-residue protein sequence, read N- to C-terminus: Flagellar brake protein YcgR (251 aa).

The PilZ domain maps to 127-239; sequence QRRDGFRVRP…ASRTLQRYID (113 aa).

Belongs to the YcgR family. As to quaternary structure, monomer. Interacts with the flagellar basal bodies.

Its subcellular location is the bacterial flagellum basal body. In terms of biological role, acts as a flagellar brake, regulating swimming and swarming in a bis-(3'-5') cyclic diguanylic acid (c-di-GMP)-dependent manner. Binds 1 c-di-GMP dimer per subunit. Increasing levels of c-di-GMP lead to decreased motility. The polypeptide is Flagellar brake protein YcgR (Leptothrix cholodnii (strain ATCC 51168 / LMG 8142 / SP-6) (Leptothrix discophora (strain SP-6))).